The following is a 345-amino-acid chain: L-threonine 3-dehydrogenase (345 aa).

Cys-42 serves as a coordination point for Zn(2+). Residues Thr-44 and His-47 each act as charge relay system in the active site. Residues His-67, Glu-68, Cys-97, Cys-100, Cys-103, and Cys-111 each coordinate Zn(2+). NAD(+)-binding positions include Ile-179, Asp-199, Arg-204, 266–268 (LGI), and 290–291 (IY).

Belongs to the zinc-containing alcohol dehydrogenase family. As to quaternary structure, homotetramer. The cofactor is Zn(2+).

It is found in the cytoplasm. The enzyme catalyses L-threonine + NAD(+) = (2S)-2-amino-3-oxobutanoate + NADH + H(+). It functions in the pathway amino-acid degradation; L-threonine degradation via oxydo-reductase pathway; glycine from L-threonine: step 1/2. Catalyzes the NAD(+)-dependent oxidation of L-threonine to 2-amino-3-ketobutyrate. This is L-threonine 3-dehydrogenase from Rhizobium etli (strain ATCC 51251 / DSM 11541 / JCM 21823 / NBRC 15573 / CFN 42).